The primary structure comprises 145 residues: Type II secretion system core protein G (145 aa).

The propeptide at 1–9 is leader sequence; sequence MRATDKQRG. An N-methylphenylalanine modification is found at Phe10. The helical transmembrane segment at 10–30 threads the bilayer; that stretch reads FTLLEIMVVIVIIGVLASLVV. Residues 123-145 form a disordered region; it reads AGPDGEMGTEDDITNWGLSKKKK.

The protein belongs to the GSP G family. Type II secretion system is composed of four main components: the outer membrane complex, the inner membrane complex, the cytoplasmic secretion ATPase and the periplasm-spanning pseudopilus. Forms homomultimers. Cleaved by the prepilin peptidase. In terms of processing, methylated by prepilin peptidase at the amino group of the N-terminal phenylalanine once the leader sequence is cleaved.

It is found in the cell inner membrane. Functionally, core component of the type II secretion system required for the energy-dependent secretion of extracellular factors such as proteases and toxins from the periplasm. Pseudopilin (pilin-like) protein that polymerizes to form the pseudopilus. Further polymerization triggers pseudopilus growth. This chain is Type II secretion system core protein G (gspG), found in Escherichia coli (strain K12).